We begin with the raw amino-acid sequence, 549 residues long: Cytochrome c oxidase subunit 1 homolog, bacteroid (549 aa).

3 helical membrane passes run 12 to 32 (IGES…VIAA), 39 to 59 (PFAF…FCIV), and 87 to 107 (FSSF…LIIA). Heme b is bound at residue H131. Helical transmembrane passes span 132–152 (TSAV…FYVV), 168–188 (FVVV…LLGV), 201–221 (ADLW…ATII), 228–248 (IFVA…LHLG), 279–299 (GHNA…YYFI), 312–332 (LSII…PHHL), 344–364 (LGMT…INGL), and 382–402 (MLVV…MMSI). Cu cation contacts are provided by H280, H330, and H331. Heme b contacts are provided by H418 and H420. 3 helical membrane-spanning segments follow: residues 423 to 443 (ALGW…PWAW), 458 to 478 (FWVA…SGIL), and 512 to 532 (AGGG…WMTV).

This sequence belongs to the heme-copper respiratory oxidase family. The cofactor is Cu(2+). Heme b is required as a cofactor.

It is found in the cell membrane. It catalyses the reaction 4 Fe(II)-[cytochrome c] + O2 + 8 H(+)(in) = 4 Fe(III)-[cytochrome c] + 2 H2O + 4 H(+)(out). Its pathway is energy metabolism; oxidative phosphorylation. In terms of biological role, cytochrome c oxidase is the component of the respiratory chain that catalyzes the reduction of oxygen to water. Subunits 1-3 form the functional core of the enzyme complex. Co I is the catalytic subunit of the enzyme. Electrons originating in cytochrome c or a quinol are transferred to the bimetallic center formed by a high-spin heme and copper B. In Bradyrhizobium diazoefficiens (strain JCM 10833 / BCRC 13528 / IAM 13628 / NBRC 14792 / USDA 110), this protein is Cytochrome c oxidase subunit 1 homolog, bacteroid (fixN).